Consider the following 193-residue polypeptide: Recombination protein RecR (193 aa).

A C4-type zinc finger spans residues 61-76; sequence CSSCNALSESEVCEIC. Positions 84–170 constitute a Toprim domain; the sequence is SQLCMVLHPR…TFTKIAQGVP (87 aa).

The protein belongs to the RecR family.

Functionally, may play a role in DNA repair. It seems to be involved in an RecBC-independent recombinational process of DNA repair. It may act with RecF and RecO. This chain is Recombination protein RecR, found in Helicobacter pylori (strain G27).